A 114-amino-acid chain; its full sequence is MKFLLPSIVIFLVLCQVFGEELGPKEDLDYWTGSNQVQDEWLQADPFREIIRRMTRKPRPHQFIGLMGKRSPANAQITRKRHKINSFVGLMGKRSQEEPESYEWGTVQIYDKRR.

Residues 1-19 (MKFLLPSIVIFLVLCQVFG) form the signal peptide. Residues 20–55 (EELGPKEDLDYWTGSNQVQDEWLQADPFREIIRRMT) constitute a propeptide that is removed on maturation. Methionine 67 and methionine 91 each carry methionine amide.

It belongs to the tachykinin family. In terms of tissue distribution, expressed in all parts of the brain, with robust expression in the olfactory bulbs and tracts, moderate expression in the hypothalamus and posterior brain, and weak expression in the telencephalon-preoptic region and optic tectum-thalamus. Also expressed in nerve fibers, intestine, testes and pituitary gland. Not expressed in the liver or kidneys.

The protein localises to the secreted. Its function is as follows. Tachykinins are active peptides which excite neurons, evoke behavioral responses, are potent vasodilators and secretagogues, and contract (directly or indirectly) many smooth muscles. Substance P produces a voltage-dependent inhibition of calcium current in retinal bipolar cells. It can enhance learning and memory, may regulate social approach and feeding behaviors, and can accelerate the functional recovery in postural balance in response to light after unilateral labyrinthectomy. This chain is Protachykinin, found in Carassius auratus (Goldfish).